Here is a 486-residue protein sequence, read N- to C-terminus: Glutamyl-tRNA(Gln) amidotransferase subunit A (486 aa).

Catalysis depends on charge relay system residues K75 and S150. Catalysis depends on S174, which acts as the Acyl-ester intermediate.

Belongs to the amidase family. GatA subfamily. In terms of assembly, heterotrimer of A, B and C subunits.

The catalysed reaction is L-glutamyl-tRNA(Gln) + L-glutamine + ATP + H2O = L-glutaminyl-tRNA(Gln) + L-glutamate + ADP + phosphate + H(+). In terms of biological role, allows the formation of correctly charged Gln-tRNA(Gln) through the transamidation of misacylated Glu-tRNA(Gln) in organisms which lack glutaminyl-tRNA synthetase. The reaction takes place in the presence of glutamine and ATP through an activated gamma-phospho-Glu-tRNA(Gln). In Nostoc punctiforme (strain ATCC 29133 / PCC 73102), this protein is Glutamyl-tRNA(Gln) amidotransferase subunit A.